Consider the following 254-residue polypeptide: MANLGYWLLALFVTMWTDVGLCKKRPKPGGWNTGGSRYPGQGSPGGNRYPPQGGTWGQPHGGGWGQPHGGSWGQPHGGSWGQPHGGGWGQGGGTHNQWNKPSKPKTNLKHVAGAAAAGAVVGGLGGYMLGSAMSRPMIHFGNDWEDRYYRENMYRYPNQVYYRPVDQYSNQNNFVHDCVNITIKQHTVTTTTKGENFTETDVKMMERVVEQMCVTQYQKESQAYYDGRRSSSTVLFSSPPVILLISFLIFLIVG.

Residues 1 to 22 (MANLGYWLLALFVTMWTDVGLC) form the signal peptide. The interaction with ADGRG6 stretch occupies residues 23-38 (KKRPKPGGWNTGGSRY). The segment at 23-231 (KKRPKPGGWN…QAYYDGRRSS (209 aa)) is interaction with GRB2, ERI3 and SYN1. Residues 25–104 (RPKPGGWNTG…HNQWNKPSKP (80 aa)) are disordered. Pro-44 carries the hydroxyproline modification. 5 consecutive repeat copies span residues 51 to 58 (PQGGTWGQ), 59 to 66 (PHGGGWGQ), 67 to 74 (PHGGSWGQ), 75 to 82 (PHGGSWGQ), and 83 to 90 (PHGGGWGQ). Positions 51–90 (PQGGTWGQPHGGGWGQPHGGSWGQPHGGSWGQPHGGGWGQ) are 5 X 8 AA tandem repeats of P-H-G-G-G-W-G-Q. The span at 54 to 94 (GTWGQPHGGGWGQPHGGSWGQPHGGSWGQPHGGGWGQGGGT) shows a compositional bias: gly residues. Residues His-60, Gly-61, Gly-62, His-68, Gly-69, Gly-70, His-76, Gly-77, Gly-78, His-84, Gly-85, and Gly-86 each contribute to the Cu(2+) site. A disulfide bond links Cys-178 and Cys-213. N-linked (GlcNAc...) asparagine glycosylation is found at Asn-180 and Asn-196. A lipid anchor (GPI-anchor amidated serine) is attached at Ser-230. Residues 231–254 (SSTVLFSSPPVILLISFLIFLIVG) constitute a propeptide, removed in mature form.

Belongs to the prion family. Monomer and homodimer. Has a tendency to aggregate into amyloid fibrils containing a cross-beta spine, formed by a steric zipper of superposed beta-strands. Soluble oligomers may represent an intermediate stage on the path to fibril formation. Copper binding may promote oligomerization. Interacts with GRB2, APP, ERI3/PRNPIP and SYN1. Mislocalized cytosolically exposed PrP interacts with MGRN1; this interaction alters MGRN1 subcellular location and causes lysosomal enlargement. Interacts with APP. Interacts with KIAA1191. Interacts with ADGRG6. In terms of processing, N-glycosylated. As to expression, highly expressed in the brain, lung, kidney and heart. Expressed at low levels in the liver and spleen.

Its subcellular location is the cell membrane. It is found in the golgi apparatus. Functionally, its primary physiological function is unclear. May play a role in neuronal development and synaptic plasticity. May be required for neuronal myelin sheath maintenance. May promote myelin homeostasis through acting as an agonist for ADGRG6 receptor. May play a role in iron uptake and iron homeostasis. Soluble oligomers are toxic to cultured neuroblastoma cells and induce apoptosis (in vitro). Association with GPC1 (via its heparan sulfate chains) targets PRNP to lipid rafts. Also provides Cu(2+) or Zn(2+) for the ascorbate-mediated GPC1 deaminase degradation of its heparan sulfate side chains. This is Major prion protein (Prnp) from Mus musculus (Mouse).